Reading from the N-terminus, the 434-residue chain is Exopolygalacturonase X-1 (434 aa).

The signal sequence occupies residues 1 to 22 (MKLSHLLTSAVSVLSLGLTVEG). Residues Asn113, Asn129, and Asn199 are each glycosylated (N-linked (GlcNAc...) asparagine). The stretch at 231 to 252 (SKNIVIQNSVINNGDDCVSFKP) is one PbH1 1 repeat. The Proton donor role is filled by Asp245. Cys247 and Cys264 are joined by a disulfide. Asn253 and Asn265 each carry an N-linked (GlcNAc...) asparagine glycan. A PbH1 2 repeat occupies 254-274 (STEILVQNLYCNGSHGISVGS). The active site involves His268. 5 N-linked (GlcNAc...) asparagine glycosylation sites follow: Asn292, Asn297, Asn329, Asn354, and Asn364. The stretch at 327 to 348 (VSNITYEDMYIENVDWAIEITQ) is one PbH1 3 repeat. A PbH1 4 repeat occupies 362–405 (PSNLTISDVYISNMYGTTSSARDPNIGTIVCSSPDVCSNIYVEN). Cys392 and Cys398 are joined by a disulfide. 2 N-linked (GlcNAc...) asparagine glycosylation sites follow: Asn423 and Asn430.

It belongs to the glycosyl hydrolase 28 family.

The protein localises to the secreted. It carries out the reaction [(1-&gt;4)-alpha-D-galacturonosyl](n) + H2O = alpha-D-galacturonate + [(1-&gt;4)-alpha-D-galacturonosyl](n-1). In terms of biological role, specific in hydrolyzing the terminal glycosidic bond of polygalacturonic acid and oligogalacturonates. The protein is Exopolygalacturonase X-1 (pgaX-1) of Emericella nidulans (strain FGSC A4 / ATCC 38163 / CBS 112.46 / NRRL 194 / M139) (Aspergillus nidulans).